The chain runs to 176 residues: Ribosome rescue factor SmrB (176 aa).

Residues 98–173 (LDVHGLNQDQ…RSTAILFLIH (76 aa)) enclose the Smr domain.

Belongs to the SmrB family. In terms of assembly, associates with collided ribosomes, but not with correctly translating polysomes.

In terms of biological role, acts as a ribosome collision sensor. Detects stalled/collided disomes (pairs of ribosomes where the leading ribosome is stalled and a second ribosome has collided with it) and endonucleolytically cleaves mRNA at the 5' boundary of the stalled ribosome. Stalled/collided disomes form a new interface (primarily via the 30S subunits) that binds SmrB. Cleaved mRNA becomes available for tmRNA ligation, leading to ribosomal subunit dissociation and rescue of stalled ribosomes. The chain is Ribosome rescue factor SmrB from Buchnera aphidicola subsp. Baizongia pistaciae (strain Bp).